The chain runs to 157 residues: 6,7-dimethyl-8-ribityllumazine synthase (157 aa).

5-amino-6-(D-ribitylamino)uracil contacts are provided by residues Phe-25, 59 to 61, and 83 to 85; these read AME and AII. 88–89 provides a ligand contact to (2S)-2-hydroxy-3-oxobutyl phosphate; that stretch reads ST. His-91 functions as the Proton donor in the catalytic mechanism. Phe-116 contributes to the 5-amino-6-(D-ribitylamino)uracil binding site. Arg-130 contacts (2S)-2-hydroxy-3-oxobutyl phosphate.

It belongs to the DMRL synthase family.

The catalysed reaction is (2S)-2-hydroxy-3-oxobutyl phosphate + 5-amino-6-(D-ribitylamino)uracil = 6,7-dimethyl-8-(1-D-ribityl)lumazine + phosphate + 2 H2O + H(+). The protein operates within cofactor biosynthesis; riboflavin biosynthesis; riboflavin from 2-hydroxy-3-oxobutyl phosphate and 5-amino-6-(D-ribitylamino)uracil: step 1/2. Catalyzes the formation of 6,7-dimethyl-8-ribityllumazine by condensation of 5-amino-6-(D-ribitylamino)uracil with 3,4-dihydroxy-2-butanone 4-phosphate. This is the penultimate step in the biosynthesis of riboflavin. The protein is 6,7-dimethyl-8-ribityllumazine synthase of Lawsonia intracellularis (strain PHE/MN1-00).